Here is a 496-residue protein sequence, read N- to C-terminus: Probable cytosol aminopeptidase (496 aa).

The Mn(2+) site is built by Lys257 and Asp262. Lys269 is a catalytic residue. Positions 281, 341, and 343 each coordinate Mn(2+). The active site involves Arg345.

This sequence belongs to the peptidase M17 family. The cofactor is Mn(2+).

The protein resides in the cytoplasm. The enzyme catalyses Release of an N-terminal amino acid, Xaa-|-Yaa-, in which Xaa is preferably Leu, but may be other amino acids including Pro although not Arg or Lys, and Yaa may be Pro. Amino acid amides and methyl esters are also readily hydrolyzed, but rates on arylamides are exceedingly low.. The catalysed reaction is Release of an N-terminal amino acid, preferentially leucine, but not glutamic or aspartic acids.. In terms of biological role, presumably involved in the processing and regular turnover of intracellular proteins. Catalyzes the removal of unsubstituted N-terminal amino acids from various peptides. The protein is Probable cytosol aminopeptidase of Synechococcus sp. (strain CC9311).